A 278-amino-acid polypeptide reads, in one-letter code: uncharacterized protein (278 aa).

Positions 1-11 (MMIHIHQDKKM) are enriched in basic and acidic residues. Disordered stretches follow at residues 1–107 (MMIH…RYFK) and 206–278 (KVSA…KASR). Positions 62–94 (KQSGGKNAKSGSKSAKSGSKSAKSGSKTSKTQS) are enriched in low complexity. The span at 97-107 (KGDESRDRYFK) shows a compositional bias: basic and acidic residues. Polar residues predominate over residues 249–260 (SAKNAKSTGNKK). The segment covering 264 to 278 (KSAGAKKAPAAKASR) has biased composition (low complexity).

This is an uncharacterized protein from Acanthamoeba polyphaga mimivirus (APMV).